The following is a 142-amino-acid chain: Peptide methionine sulfoxide reductase MsrB (142 aa).

The region spanning 13–135 is the MsrB domain; that stretch reads EKDWKVELSE…NSLSMTFKGE (123 aa). Zn(2+) is bound by residues C52, C55, C101, and C104. Catalysis depends on C124, which acts as the Nucleophile.

It belongs to the MsrB Met sulfoxide reductase family. Requires Zn(2+) as cofactor.

It carries out the reaction L-methionyl-[protein] + [thioredoxin]-disulfide + H2O = L-methionyl-(R)-S-oxide-[protein] + [thioredoxin]-dithiol. In Alteromonas mediterranea (strain DSM 17117 / CIP 110805 / LMG 28347 / Deep ecotype), this protein is Peptide methionine sulfoxide reductase MsrB.